The chain runs to 128 residues: Type III secretion protein HrcQb (128 aa).

The segment covering 1–21 (MSTEDLYQEDVEMLDDYEDPS) has biased composition (acidic residues). The interval 1-57 (MSTEDLYQEDVEMLDDYEDPSTEQHWSEEDGEPSGYATAEPDDHAAQEEQDEPPALD) is disordered. Positions 50-128 (QDEPPALDSL…LQITRLVTRS (79 aa)) are hrcQb-C. Positions 78–81 (RRLD) are dimer-dimer interface.

It belongs to the FliN/MopA/SpaO family. Homotetramer. The four monomers assemble into two tightly bound homodimers. Interacts with HrcQa.

Its subcellular location is the cytoplasm. Its function is as follows. Component of the type III secretion system, which is required for effector protein delivery, parasitism, and pathogenicity. Probably participates in the formation of a C-ring-like assembly along with HrcQa. This is Type III secretion protein HrcQb (hrcQb) from Pseudomonas savastanoi pv. phaseolicola (Pseudomonas syringae pv. phaseolicola).